Here is a 469-residue protein sequence, read N- to C-terminus: 6-phospho-beta-galactosidase (469 aa).

Residues Gln19, His116, Asn159, Glu160, and Asn297 each coordinate D-galactose 6-phosphate. Residue Glu160 is the Proton donor of the active site. The active-site Nucleophile is Glu375. D-galactose 6-phosphate-binding residues include Ser428, Trp429, Lys435, and Tyr437.

The protein belongs to the glycosyl hydrolase 1 family.

It catalyses the reaction a 6-phospho-beta-D-galactoside + H2O = D-galactose 6-phosphate + an alcohol. It participates in carbohydrate metabolism; lactose degradation; D-galactose 6-phosphate and beta-D-glucose from lactose 6-phosphate: step 1/1. The polypeptide is 6-phospho-beta-galactosidase (Streptococcus equi subsp. zooepidemicus (strain MGCS10565)).